The sequence spans 298 residues: MNHIQEAFLNTLKVERNFSEHTLKSYQDDLIQFNQFLEQEHLQLKTFEYRDARNYLSYLYSNHLKRTSVSRKISTLRTFYEYWMTLDENIINPFVQLVHPKKEKYLPQFFYEEEMEALFKTVEEDTSKSLRDRVILELLYATGIRVSELVNIKKQDIDFYANGVTVLGKGSKERFVPFGAYCRQSIENYLEHFKPIQSCNHDFLIVNMKGEAITERGVRYVLNDIVKRTAGVSEIHPHKLRHTFATHLLNQGADLRTVQSLLGHVNLSTTGKYTHVSNQQLRKVYLNAHPRAKKENET.

One can recognise a Core-binding (CB) domain in the interval 1–84 (MNHIQEAFLN…TLRTFYEYWM (84 aa)). Positions 105 to 286 (YLPQFFYEEE…SNQQLRKVYL (182 aa)) constitute a Tyr recombinase domain. Residues Arg145, Lys169, His238, Arg241, and His264 contribute to the active site. The active-site O-(3'-phospho-DNA)-tyrosine intermediate is the Tyr273.

This sequence belongs to the 'phage' integrase family. XerC subfamily. In terms of assembly, forms a cyclic heterotetrameric complex composed of two molecules of XerC and two molecules of XerD.

The protein resides in the cytoplasm. Functionally, site-specific tyrosine recombinase, which acts by catalyzing the cutting and rejoining of the recombining DNA molecules. The XerC-XerD complex is essential to convert dimers of the bacterial chromosome into monomers to permit their segregation at cell division. It also contributes to the segregational stability of plasmids. The sequence is that of Tyrosine recombinase XerC from Staphylococcus aureus (strain MSSA476).